Reading from the N-terminus, the 870-residue chain is MCLLFNRVVDMENPERHTVYLVVSLFVTFLSNKNSTPTDEKANAKKQSLVFRHFNTLLGYSSTEKCFTIPPARLRKAAVCNAFISGLPEILDMNLHTGNQLLPTVAQLLIHLPSPQKLASDQNVTNYSLALLTQHTRHLWLQSLILILYKYRFDQLPVSEYIVRLIGIVVKTLQNQVHECSDAADQSAEIDTWDEIEDDDVARAELIRPESLTVTTIQEATPAAEGMVHIGAVCVMQPTIVEPEGLAPEPLIARKRSTAVQEVRRKKSAIEVVKKSCTLRCGHCNEAIEMFDEETISLCLIALETFLHREPSMAAPILFKILYTVTRLIDTPMYPWHSTEMFVPANSRSVAKQMLRVSLHHLSTSAICLQLFDTKIPRPDAFWSVVALSLADFPELSPVYFIQILMEDLEESWPGSVKLIMKNLAFYIVEIPTDMYNNPWKDLVGHLETFFKRYHSAISADNGITPTRAEIENVIIVMTHVFKVQTFSSSKSPVTLVEAFARWLSESLHSADVSLESLLGVCTACNRALIRERDKQCITRALVTELMQAIKFKVKLHESNYVTIANMILQDAGEDIEVPLLDDQFNTAASEAIRPFLFEVLDFIADLHVIAKLKKESNSDALGGDLKVKLAEAIAVEMSRSNARDCRTVIRFIPWLMSPPSVTQAAPSAFADSVTNVRVLSWLLLGALHANHSCLPVPIECSQHMADYIHFVLAGFADQSKQSVVHMSALFHAFHLCQLWTVYCERAATYSSTTAFAHLVDFWARVTPAILQLLSHSKVLADMVNLHFLNTIQALQQVNSALLCQLYSMWAPILTAYHSQIPNQLRMKLDSCQNQPSLEAPLVTEWLKKVRYKISQVELQTSAASPYYTV.

The sequence is that of Uncoordinated protein 79 (unc-79) from Caenorhabditis elegans.